Consider the following 242-residue polypeptide: Ribosomal RNA small subunit methyltransferase G (242 aa).

Residues glycine 81, phenylalanine 86, 104-106 (DST), 132-133 (AE), and arginine 151 contribute to the S-adenosyl-L-methionine site.

Belongs to the methyltransferase superfamily. RNA methyltransferase RsmG family.

The protein localises to the cytoplasm. Functionally, specifically methylates the N7 position of a guanine in 16S rRNA. The chain is Ribosomal RNA small subunit methyltransferase G from Synechococcus elongatus (strain ATCC 33912 / PCC 7942 / FACHB-805) (Anacystis nidulans R2).